Here is a 268-residue protein sequence, read N- to C-terminus: Interleukin-1 alpha (268 aa).

A propeptide spanning residues 1–112 (MAKVPDLFED…NTEEEIIKPR (112 aa)) is cleaved from the precursor. K82 bears the N6-acetyllysine mark. The tract at residues 82–86 (KKRRL) is nuclear localization signal (NLS). At S87 the chain carries Phosphoserine. Residues N102 and N141 are each glycosylated (N-linked (GlcNAc...) asparagine).

This sequence belongs to the IL-1 family. As to quaternary structure, monomer. Interacts with TMED10; the interaction mediates the translocation from the cytoplasm into the ERGIC (endoplasmic reticulum-Golgi intermediate compartment) and thereby secretion. Interacts with IL1R1. Interacts with S100A13; this interaction is the first step in the export of IL1A, followed by direct translocation of this complex across the plasma membrane. In terms of processing, acetylated within its nuclear localization sequence, which impacts subcellular localization. Proteolytic processed by CAPN1 in a calcium-dependent manner. Cleavage from 31 kDa precursor to 18 kDa biologically active molecules. Post-translationally, phosphorylated. Phosphorylation greatly enhances susceptibility to digestion and promotes the conversion of pre-IL1A alpha to the biologically active IL1A.

It localises to the nucleus. The protein localises to the cytoplasm. It is found in the secreted. Functionally, cytokine constitutively present intracellularly in nearly all resting non-hematopoietic cells that plays an important role in inflammation and bridges the innate and adaptive immune systems. After binding to its receptor IL1R1 together with its accessory protein IL1RAP, forms the high affinity interleukin-1 receptor complex. Signaling involves the recruitment of adapter molecules such as MYD88, IRAK1 or IRAK4. In turn, mediates the activation of NF-kappa-B and the three MAPK pathways p38, p42/p44 and JNK pathways. Within the cell, acts as an alarmin and cell death results in its liberation in the extracellular space after disruption of the cell membrane to induce inflammation and alert the host to injury or damage. In addition to its role as a danger signal, which occurs when the cytokine is passively released by cell necrosis, directly senses DNA damage and acts as signal for genotoxic stress without loss of cell integrity. In Bos taurus (Bovine), this protein is Interleukin-1 alpha (IL1A).